We begin with the raw amino-acid sequence, 81 residues long: Fungal defensin micasin (81 aa).

The signal sequence occupies residues 1-21 (MQFTKLATILLVSLMGSAAIA). The propeptide occupies 22-43 (APATNNAAVDAAADATPAVEKR). Cystine bridges form between C47–C68, C54–C76, and C58–C78.

It belongs to the invertebrate defensin family.

The protein resides in the secreted. Functionally, antibacterial peptide with potent activity against both Gram-positive and Gram-negative bacteria. May kill bacteria via an intracellular action mode to affect protein folding. Does not show effects on tested filamentous fungi or on the yeast S.cerevisiae. Does not act by destroying the membrane integrity, which is consistent with its nonamphiphilic architecture. Acts more rapidly than vancomycin, suggesting it does not act by inhibiting cell-wall biosynthesis. Does not cause hemolysis and has no cytotoxic effect on HEK cells. In vivo, is as efficient as vancomycin to protect mouse peritonitis models from S.aureus and P.aeruginosa infections. This Arthroderma otae (Microsporum canis) protein is Fungal defensin micasin.